Reading from the N-terminus, the 241-residue chain is Uridylate kinase (241 aa).

15-18 (KLSG) contacts ATP. The involved in allosteric activation by GTP stretch occupies residues 23–28 (GAEGFG). Gly57 is a UMP binding site. ATP is bound by residues Gly58 and Arg62. UMP contacts are provided by residues Asp77 and 138-145 (TGNPFFTT). Thr165, Tyr171, and Asp174 together coordinate ATP.

The protein belongs to the UMP kinase family. Homohexamer.

Its subcellular location is the cytoplasm. The enzyme catalyses UMP + ATP = UDP + ADP. It participates in pyrimidine metabolism; CTP biosynthesis via de novo pathway; UDP from UMP (UMPK route): step 1/1. Allosterically activated by GTP. Inhibited by UTP. Functionally, catalyzes the reversible phosphorylation of UMP to UDP. The chain is Uridylate kinase from Yersinia pseudotuberculosis serotype O:1b (strain IP 31758).